Reading from the N-terminus, the 564-residue chain is Dihydroxy-acid dehydratase (564 aa).

D78 provides a ligand contact to Mg(2+). C119 is a [2Fe-2S] cluster binding site. 2 residues coordinate Mg(2+): D120 and K121. N6-carboxylysine is present on K121. C192 is a binding site for [2Fe-2S] cluster. E451 lines the Mg(2+) pocket. The active-site Proton acceptor is S477.

The protein belongs to the IlvD/Edd family. In terms of assembly, homodimer. The cofactor is [2Fe-2S] cluster. Requires Mg(2+) as cofactor.

The enzyme catalyses (2R)-2,3-dihydroxy-3-methylbutanoate = 3-methyl-2-oxobutanoate + H2O. The catalysed reaction is (2R,3R)-2,3-dihydroxy-3-methylpentanoate = (S)-3-methyl-2-oxopentanoate + H2O. It functions in the pathway amino-acid biosynthesis; L-isoleucine biosynthesis; L-isoleucine from 2-oxobutanoate: step 3/4. The protein operates within amino-acid biosynthesis; L-valine biosynthesis; L-valine from pyruvate: step 3/4. Functions in the biosynthesis of branched-chain amino acids. Catalyzes the dehydration of (2R,3R)-2,3-dihydroxy-3-methylpentanoate (2,3-dihydroxy-3-methylvalerate) into 2-oxo-3-methylpentanoate (2-oxo-3-methylvalerate) and of (2R)-2,3-dihydroxy-3-methylbutanoate (2,3-dihydroxyisovalerate) into 2-oxo-3-methylbutanoate (2-oxoisovalerate), the penultimate precursor to L-isoleucine and L-valine, respectively. The polypeptide is Dihydroxy-acid dehydratase (Nitratiruptor sp. (strain SB155-2)).